The primary structure comprises 110 residues: UPF0060 membrane protein Ping_0587 (110 aa).

The next 4 membrane-spanning stretches (helical) occupy residues 6 to 26 (IFGI…LPYL), 33 to 53 (SIWL…LLTL), 61 to 81 (TYAA…WLVE), and 87 to 107 (MTDL…MFGP).

This sequence belongs to the UPF0060 family.

The protein resides in the cell inner membrane. This chain is UPF0060 membrane protein Ping_0587, found in Psychromonas ingrahamii (strain DSM 17664 / CCUG 51855 / 37).